A 113-amino-acid polypeptide reads, in one-letter code: uncharacterized protein (113 aa).

Residues 16–96 (LVDNETRCFH…STVHCKYCNH (81 aa)) form a CHY-type; degenerate zinc finger. The Zn(2+) site is built by C23, H25, C46, C49, C73, C76, C91, and C94.

Its subcellular location is the cytoplasm. The protein localises to the nucleus. This is an uncharacterized protein from Schizosaccharomyces pombe (strain 972 / ATCC 24843) (Fission yeast).